Consider the following 224-residue polypeptide: Urease accessory protein UreF (224 aa).

This sequence belongs to the UreF family. UreD, UreF and UreG form a complex that acts as a GTP-hydrolysis-dependent molecular chaperone, activating the urease apoprotein by helping to assemble the nickel containing metallocenter of UreC. The UreE protein probably delivers the nickel.

It localises to the cytoplasm. Its function is as follows. Required for maturation of urease via the functional incorporation of the urease nickel metallocenter. This chain is Urease accessory protein UreF, found in Pseudomonas fluorescens (strain ATCC BAA-477 / NRRL B-23932 / Pf-5).